We begin with the raw amino-acid sequence, 63 residues long: uncharacterized protein (63 aa).

This is an uncharacterized protein from Orgyia pseudotsugata (Douglas-fir tussock moth).